We begin with the raw amino-acid sequence, 380 residues long: Queuine tRNA-ribosyltransferase (380 aa).

D96 serves as the catalytic Proton acceptor. Residues D96–F100, D150, Q193, and G220 contribute to the substrate site. The segment at G251 to S257 is RNA binding. The Nucleophile role is filled by D270. The interval T275–R279 is RNA binding; important for wobble base 34 recognition. 4 residues coordinate Zn(2+): C308, C310, C313, and H339.

It belongs to the queuine tRNA-ribosyltransferase family. As to quaternary structure, homodimer. Within each dimer, one monomer is responsible for RNA recognition and catalysis, while the other monomer binds to the replacement base PreQ1. Requires Zn(2+) as cofactor.

The enzyme catalyses 7-aminomethyl-7-carbaguanine + guanosine(34) in tRNA = 7-aminomethyl-7-carbaguanosine(34) in tRNA + guanine. It functions in the pathway tRNA modification; tRNA-queuosine biosynthesis. Functionally, catalyzes the base-exchange of a guanine (G) residue with the queuine precursor 7-aminomethyl-7-deazaguanine (PreQ1) at position 34 (anticodon wobble position) in tRNAs with GU(N) anticodons (tRNA-Asp, -Asn, -His and -Tyr). Catalysis occurs through a double-displacement mechanism. The nucleophile active site attacks the C1' of nucleotide 34 to detach the guanine base from the RNA, forming a covalent enzyme-RNA intermediate. The proton acceptor active site deprotonates the incoming PreQ1, allowing a nucleophilic attack on the C1' of the ribose to form the product. After dissociation, two additional enzymatic reactions on the tRNA convert PreQ1 to queuine (Q), resulting in the hypermodified nucleoside queuosine (7-(((4,5-cis-dihydroxy-2-cyclopenten-1-yl)amino)methyl)-7-deazaguanosine). This chain is Queuine tRNA-ribosyltransferase, found in Streptococcus suis (strain 98HAH33).